The following is a 350-amino-acid chain: GTP 3',8-cyclase (350 aa).

Residues 27–245 (TFGRIATDLR…LRAHFTLVPD (219 aa)) enclose the Radical SAM core domain. GTP is bound at residue R36. The [4Fe-4S] cluster site is built by C43 and C47. Y49 is a binding site for S-adenosyl-L-methionine. Residue C50 participates in [4Fe-4S] cluster binding. GTP is bound at residue R87. G91 lines the S-adenosyl-L-methionine pocket. T118 provides a ligand contact to GTP. Residue S142 coordinates S-adenosyl-L-methionine. GTP is bound at residue K179. An S-adenosyl-L-methionine-binding site is contributed by M213. C277 and C280 together coordinate [4Fe-4S] cluster. 282–284 (RTR) lines the GTP pocket. C294 lines the [4Fe-4S] cluster pocket.

It belongs to the radical SAM superfamily. MoaA family. In terms of assembly, monomer and homodimer. The cofactor is [4Fe-4S] cluster.

The catalysed reaction is GTP + AH2 + S-adenosyl-L-methionine = (8S)-3',8-cyclo-7,8-dihydroguanosine 5'-triphosphate + 5'-deoxyadenosine + L-methionine + A + H(+). Its pathway is cofactor biosynthesis; molybdopterin biosynthesis. In terms of biological role, catalyzes the cyclization of GTP to (8S)-3',8-cyclo-7,8-dihydroguanosine 5'-triphosphate. The chain is GTP 3',8-cyclase from Mycobacterium sp. (strain JLS).